The sequence spans 139 residues: Trafficking protein particle complex subunit 2-like protein (139 aa).

The protein belongs to the TRAPP small subunits family. Sedlin subfamily. In terms of assembly, component of the multisubunit TRAPP (transport protein particle) complex, which includes at least TRAPPC2, TRAPPC2L, TRAPPC3, TRAPPC3L, TRAPPC4, TRAPPC5, TRAPPC8, TRAPPC9, TRAPPC10, TRAPPC11 and TRAPPC12. Interacts with the heterodimer TRAPPC3-TRAPPC6A.

The protein resides in the cytoplasm. It localises to the perinuclear region. Its subcellular location is the endoplasmic reticulum. It is found in the golgi apparatus. In terms of biological role, may play a role in vesicular transport from endoplasmic reticulum to Golgi. The protein is Trafficking protein particle complex subunit 2-like protein (Trappc2l) of Mus musculus (Mouse).